The chain runs to 269 residues: Indole-3-glycerol phosphate synthase (269 aa).

The protein belongs to the TrpC family.

The enzyme catalyses 1-(2-carboxyphenylamino)-1-deoxy-D-ribulose 5-phosphate + H(+) = (1S,2R)-1-C-(indol-3-yl)glycerol 3-phosphate + CO2 + H2O. It participates in amino-acid biosynthesis; L-tryptophan biosynthesis; L-tryptophan from chorismate: step 4/5. This Streptomyces griseus subsp. griseus (strain JCM 4626 / CBS 651.72 / NBRC 13350 / KCC S-0626 / ISP 5235) protein is Indole-3-glycerol phosphate synthase.